Reading from the N-terminus, the 356-residue chain is MRLVLFILLLPVCLATPFHQKGLFDFMLEDEGSADLASTDDPVISGFGPVCPFRCQCHLRVVQCSDLGLERVPKDLPPDTTLLDLQNNKITEIRDGDFKNLKNLHALILVNNKISKISPQAFAPLKKLERLYLSKNNLKELPENMPKSLQEIRAHENEISKLRKAVFNGLNQVIVLELGTNPLKSSGIENGAFQGMKRLSYIRIADTNITSIPKGLPPSLTELHLDGNKISKIDAEGLSGLTNLAKLGLSFNSISSVENGSLNNVPHLRELHLNNNELVRVPSGLGEHKYIQVVYLHNNKIASIGINDFCPLGYNTKKATYSGVSLFSNPVQYWEIQPSAFRCIHERSAVQIGNYK.

Positions 1–15 (MRLVLFILLLPVCLA) are cleaved as a signal peptide. Positions 16-29 (TPFHQKGLFDFMLE) are excised as a propeptide. O-linked (Xyl...) (glycosaminoglycan) serine glycosylation is present at serine 45. 2 disulfide bridges follow: cysteine 51–cysteine 57 and cysteine 55–cysteine 64. 12 LRR repeats span residues 70 to 90 (ERVP…NNKI), 91 to 114 (TEIR…NNKI), 115 to 138 (SKIS…KNNL), 139 to 159 (KELP…ENEI), 160 to 183 (SKLR…TNPL), 184 to 209 (KSSG…DTNI), 210 to 230 (TSIP…GNKI), 231 to 254 (SKID…FNSI), 255 to 278 (SSVE…NNEL), 279 to 301 (VRVP…NNKI), 302 to 331 (ASIG…SNPV), and 332 to 356 (QYWE…GNYK). Asparagine 208 carries N-linked (GlcNAc...) asparagine glycosylation. An N-linked (GlcNAc...) asparagine glycan is attached at asparagine 259. A disulfide bridge connects residues cysteine 310 and cysteine 343.

It belongs to the small leucine-rich proteoglycan (SLRP) family. SLRP class I subfamily. As to quaternary structure, binds to type I and type II collagen, to fibronectin and TGF-beta. Forms a ternary complex with MFAP2 and ELN. The attached glycosaminoglycan chain can be either chondroitin sulfate or dermatan sulfate depending upon the tissue of origin.

The protein resides in the secreted. It is found in the extracellular space. The protein localises to the extracellular matrix. Its function is as follows. May affect the rate of fibrils formation. The polypeptide is Decorin (DCN) (Coturnix japonica (Japanese quail)).